A 135-amino-acid polypeptide reads, in one-letter code: NADH-quinone oxidoreductase subunit A (135 aa).

3 consecutive transmembrane segments (helical) span residues 9–29 (YFPI…LLTV), 67–87 (VGML…WVVV), and 97–117 (LFGF…FFYI).

This sequence belongs to the complex I subunit 3 family. As to quaternary structure, NDH-1 is composed of 14 different subunits. Subunits NuoA, H, J, K, L, M, N constitute the membrane sector of the complex.

It is found in the cell inner membrane. The enzyme catalyses a quinone + NADH + 5 H(+)(in) = a quinol + NAD(+) + 4 H(+)(out). In terms of biological role, NDH-1 shuttles electrons from NADH, via FMN and iron-sulfur (Fe-S) centers, to quinones in the respiratory chain. The immediate electron acceptor for the enzyme in this species is believed to be ubiquinone. Couples the redox reaction to proton translocation (for every two electrons transferred, four hydrogen ions are translocated across the cytoplasmic membrane), and thus conserves the redox energy in a proton gradient. This Solibacter usitatus (strain Ellin6076) protein is NADH-quinone oxidoreductase subunit A.